The primary structure comprises 164 residues: Class I hydrophobin rodA (164 aa).

An N-terminal signal peptide occupies residues 1–18 (MRFSISALVLGLAATVYA). An N-linked (GlcNAc...) asparagine glycan is attached at Asn50. 4 disulfides stabilise this stretch: Cys60/Cys138, Cys68/Cys132, Cys69/Cys109, and Cys139/Cys157.

Belongs to the fungal hydrophobin family. Self-assembles to form functional amyloid fibrils called rodlets. Self-assembly into fibrillar rodlets occurs spontaneously at hydrophobic:hydrophilic interfaces and the rodlets further associate laterally to form amphipathic monolayers.

It is found in the secreted. Its subcellular location is the cell wall. Aerial growth, conidiation, and dispersal of filamentous fungi in the environment rely upon a capability of their secreting small amphipathic proteins called hydrophobins (HPBs) with low sequence identity. Class I can self-assemble into an outermost layer of rodlet bundles on aerial cell surfaces, conferring cellular hydrophobicity that supports fungal growth, development and dispersal; whereas Class II form highly ordered films at water-air interfaces through intermolecular interactions but contribute nothing to the rodlet structure. RodA is a class I hydrophobin involved in the cell surface hydrophobicity and conidiation under aerial conditions. The surface rodlet layer of the conidial cell wall makes airborne conidia of filamentous fungi inert to both innate and adaptive immunity. This is Class I hydrophobin rodA from Penicillium camembertii.